The chain runs to 102 residues: Small ribosomal subunit protein uS10 (102 aa).

This sequence belongs to the universal ribosomal protein uS10 family. As to quaternary structure, part of the 30S ribosomal subunit.

Functionally, involved in the binding of tRNA to the ribosomes. The sequence is that of Small ribosomal subunit protein uS10 from Agrobacterium fabrum (strain C58 / ATCC 33970) (Agrobacterium tumefaciens (strain C58)).